Reading from the N-terminus, the 396-residue chain is L-lactate dehydrogenase (396 aa).

The FMN hydroxy acid dehydrogenase domain occupies 1–380 (MIISAASDYR…SGDSLVQELG (380 aa)). Y24 provides a ligand contact to substrate. S106 and Q127 together coordinate FMN. Y129 serves as a coordination point for substrate. T155 is a binding site for FMN. R164 lines the substrate pocket. An FMN-binding site is contributed by K251. H275 (proton acceptor) is an active-site residue. R278 is a binding site for substrate. FMN is bound at residue 306–330 (DSGIRNGLDVVRMIALGADTVLLGR).

The protein belongs to the FMN-dependent alpha-hydroxy acid dehydrogenase family. FMN serves as cofactor.

The protein localises to the cell inner membrane. It carries out the reaction (S)-lactate + A = pyruvate + AH2. Catalyzes the conversion of L-lactate to pyruvate. Is coupled to the respiratory chain. This Salmonella paratyphi A (strain ATCC 9150 / SARB42) protein is L-lactate dehydrogenase.